Consider the following 109-residue polypeptide: Nucleoid-associated protein Sama_1311 (109 aa).

This sequence belongs to the YbaB/EbfC family. As to quaternary structure, homodimer.

It localises to the cytoplasm. The protein localises to the nucleoid. In terms of biological role, binds to DNA and alters its conformation. May be involved in regulation of gene expression, nucleoid organization and DNA protection. This chain is Nucleoid-associated protein Sama_1311, found in Shewanella amazonensis (strain ATCC BAA-1098 / SB2B).